Consider the following 432-residue polypeptide: tRNA modification GTPase MnmE (432 aa).

(6S)-5-formyl-5,6,7,8-tetrahydrofolate is bound by residues arginine 23, glutamate 85, and lysine 124. A TrmE-type G domain is found at 217–362 (GARLALIGAP…LKEAVREALL (146 aa)). A K(+)-binding site is contributed by asparagine 227. Residues 227 to 232 (NAGKSS), 246 to 252 (SPIPGTT), and 271 to 274 (DTAG) contribute to the GTP site. Mg(2+) is bound at residue serine 231. The K(+) site is built by serine 246, isoleucine 248, and threonine 251. Residue threonine 252 coordinates Mg(2+). Residue lysine 432 coordinates (6S)-5-formyl-5,6,7,8-tetrahydrofolate.

This sequence belongs to the TRAFAC class TrmE-Era-EngA-EngB-Septin-like GTPase superfamily. TrmE GTPase family. As to quaternary structure, homodimer. Heterotetramer of two MnmE and two MnmG subunits. Requires K(+) as cofactor.

The protein resides in the cytoplasm. Exhibits a very high intrinsic GTPase hydrolysis rate. Involved in the addition of a carboxymethylaminomethyl (cmnm) group at the wobble position (U34) of certain tRNAs, forming tRNA-cmnm(5)s(2)U34. This chain is tRNA modification GTPase MnmE, found in Thermus thermophilus (strain ATCC 27634 / DSM 579 / HB8).